The chain runs to 434 residues: Forkhead box protein A2-A (434 aa).

The segment at residues 149–243 is a DNA-binding region (fork-head); it reads KPPYSYISLI…ENGCYLRRQK (95 aa). A compositionally biased stretch (basic and acidic residues) spans 249–262; that stretch reads KKPSLREGGGKKLS. Disordered stretches follow at residues 249-339 and 408-434; these read KKPS…QSHL and SGLE…MNSS. Low complexity-rich tracts occupy residues 263-291 and 317-333; these read EGAS…SSSP and ASQA…VLSH. Polar residues predominate over residues 408–422; that stretch reads SGLESSPITSDTSYY.

As to expression, at gastrula stage, expressed in both the anterior and posterior endoderm, with endodermal expression persisting into early tailbud stages. Expression is absent in gastrula stage ectoderm. During tailbud stages, expressed in the pharyngeal region, the neural floor plate, the midbrain, hindbrain and in cranial neural crest cells. Expressed in the foregut of hatching larvae. In tadpoles, expressed in the pharyngeal pouches and in other anterior endodermal regions. Within the tadpole nervous system, expressed in the neural floor plate, at high levels in the ventral midbrain and hindbrain, and at lower levels in the spinal cord. Expressed in the adult lung and brain.

The protein localises to the nucleus. Functionally, acts as a transcriptional activator during early development, limiting the extent of mesoderm formation in the gastrula. Binds to DNA via the target sequence 5'-GT[AC]AACA-3', with 5'-GTAAACA-3' being the preferred binding site. The chain is Forkhead box protein A2-A (foxa2-a) from Xenopus laevis (African clawed frog).